Here is a 639-residue protein sequence, read N- to C-terminus: 1-deoxy-D-xylulose-5-phosphate synthase (639 aa).

Residues H79 and 120–122 (GHS) each bind thiamine diphosphate. D151 contributes to the Mg(2+) binding site. Residues 152–153 (GS), N180, Y289, and E371 each bind thiamine diphosphate. N180 is a Mg(2+) binding site.

It belongs to the transketolase family. DXPS subfamily. As to quaternary structure, homodimer. Mg(2+) serves as cofactor. Requires thiamine diphosphate as cofactor.

The catalysed reaction is D-glyceraldehyde 3-phosphate + pyruvate + H(+) = 1-deoxy-D-xylulose 5-phosphate + CO2. The protein operates within metabolic intermediate biosynthesis; 1-deoxy-D-xylulose 5-phosphate biosynthesis; 1-deoxy-D-xylulose 5-phosphate from D-glyceraldehyde 3-phosphate and pyruvate: step 1/1. In terms of biological role, catalyzes the acyloin condensation reaction between C atoms 2 and 3 of pyruvate and glyceraldehyde 3-phosphate to yield 1-deoxy-D-xylulose-5-phosphate (DXP). This chain is 1-deoxy-D-xylulose-5-phosphate synthase, found in Agrobacterium fabrum (strain C58 / ATCC 33970) (Agrobacterium tumefaciens (strain C58)).